We begin with the raw amino-acid sequence, 532 residues long: Probable cyclic di-GMP phosphodiesterase PdeD (532 aa).

2 consecutive transmembrane segments (helical) span residues 16–36 and 245–265; these read MIVC…VRFI and LPLA…ATAY. Residues 266–515 enclose the EAL domain; that stretch reads RMSFSREINL…DFPKWLAGSQ (250 aa).

Its subcellular location is the cell membrane. It catalyses the reaction 3',3'-c-di-GMP + H2O = 5'-phosphoguanylyl(3'-&gt;5')guanosine + H(+). In terms of biological role, phosphodiesterase (PDE) that catalyzes the hydrolysis of cyclic-di-GMP (c-di-GMP) to 5'-pGpG. May serve as a negative regulator of cellulose synthesis (as has been suggested for S.typhimurium); overexpression inhibits cell aggregation in strains able to produce adhesive curli fimbriae. Cyclic-di-GMP is a second messenger which controls cell surface-associated traits in bacteria. In Escherichia coli (strain K12), this protein is Probable cyclic di-GMP phosphodiesterase PdeD.